The chain runs to 506 residues: ATP synthase subunit alpha, chloroplastic (506 aa).

170–177 (GDRQTGKT) contributes to the ATP binding site. Threonine 257 bears the Phosphothreonine mark.

This sequence belongs to the ATPase alpha/beta chains family. As to quaternary structure, F-type ATPases have 2 components, CF(1) - the catalytic core - and CF(0) - the membrane proton channel. CF(1) has five subunits: alpha(3), beta(3), gamma(1), delta(1), epsilon(1). CF(0) has four main subunits: a, b, b' and c.

It localises to the plastid. Its subcellular location is the chloroplast thylakoid membrane. The enzyme catalyses ATP + H2O + 4 H(+)(in) = ADP + phosphate + 5 H(+)(out). Produces ATP from ADP in the presence of a proton gradient across the membrane. The alpha chain is a regulatory subunit. This Olimarabidopsis pumila (Dwarf rocket) protein is ATP synthase subunit alpha, chloroplastic.